The primary structure comprises 359 residues: Peptide chain release factor 1 (359 aa).

Gln235 carries the post-translational modification N5-methylglutamine. The interval 287–312 is disordered; it reads AQEASAMRSAQVGSGDRSERIRTYNF.

This sequence belongs to the prokaryotic/mitochondrial release factor family. Methylated by PrmC. Methylation increases the termination efficiency of RF1.

The protein localises to the cytoplasm. Functionally, peptide chain release factor 1 directs the termination of translation in response to the peptide chain termination codons UAG and UAA. The sequence is that of Peptide chain release factor 1 from Chlamydia trachomatis serovar A (strain ATCC VR-571B / DSM 19440 / HAR-13).